Here is a 729-residue protein sequence, read N- to C-terminus: ATP-dependent DNA helicase Hel308 (729 aa).

ATP contacts are provided by residues Gln-28 and 46–53 (IPTASGKT). Residues 33 to 199 (EKGLLEGRNL…WLEAELVVSE (167 aa)) enclose the Helicase ATP-binding domain. The DEAH box signature appears at 144–147 (DEVH). Positions 232–426 (AVNLALDTLK…SKLGTENALR (195 aa)) constitute a Helicase C-terminal domain. Positions 706–729 (SSGIIASEPPEKSPYSGQKTISDY) are disordered. The span at 720–729 (YSGQKTISDY) shows a compositional bias: polar residues.

This sequence belongs to the helicase family. Hel308 subfamily. Monomer.

The catalysed reaction is Couples ATP hydrolysis with the unwinding of duplex DNA by translocating in the 3'-5' direction.. It catalyses the reaction ATP + H2O = ADP + phosphate + H(+). Its function is as follows. DNA-dependent ATPase and 3'-5' DNA helicase that may be involved in repair of stalled replication forks. The protein is ATP-dependent DNA helicase Hel308 of Methanosarcina barkeri (strain Fusaro / DSM 804).